The primary structure comprises 167 residues: SsrA-binding protein (167 aa).

Basic and acidic residues predominate over residues 139–158 (QNHDKRDAAKDRDWQRDKQR). The interval 139 to 167 (QNHDKRDAAKDRDWQRDKQRVMRRHNRDA) is disordered.

This sequence belongs to the SmpB family.

It is found in the cytoplasm. Its function is as follows. Required for rescue of stalled ribosomes mediated by trans-translation. Binds to transfer-messenger RNA (tmRNA), required for stable association of tmRNA with ribosomes. tmRNA and SmpB together mimic tRNA shape, replacing the anticodon stem-loop with SmpB. tmRNA is encoded by the ssrA gene; the 2 termini fold to resemble tRNA(Ala) and it encodes a 'tag peptide', a short internal open reading frame. During trans-translation Ala-aminoacylated tmRNA acts like a tRNA, entering the A-site of stalled ribosomes, displacing the stalled mRNA. The ribosome then switches to translate the ORF on the tmRNA; the nascent peptide is terminated with the 'tag peptide' encoded by the tmRNA and targeted for degradation. The ribosome is freed to recommence translation, which seems to be the essential function of trans-translation. This Xanthomonas axonopodis pv. citri (strain 306) protein is SsrA-binding protein.